The following is a 576-amino-acid chain: High-affinity choline transporter 1 (576 aa).

The chain crosses the membrane as a helical span at residues 6–26 (GIVAIVFFYVLILVVGIWAGR). Residues 27–51 (KSKSSKELESEAGAATEEVMLAGRN) are Cytoplasmic-facing. Residues 52–72 (IGTLVGIFTMTATWVGGAYIN) traverse the membrane as a helical segment. At 73-82 (GTAEALYNGG) the chain is on the extracellular side. A helical transmembrane segment spans residues 83-103 (LLGCQAPVGYAISLVMGGLLF). Residues 104–126 (AKKMREEGYITMLDPFQHKYGQR) lie on the Cytoplasmic side of the membrane. The helical transmembrane segment at 127–147 (IGGLMYVPALLGETFWTAAIL) threads the bilayer. Over 148-165 (SALGATLSVILGIDMNAS) the chain is Extracellular. Residues 166–186 (VTLSACIAVFYTFTGGYYAVA) traverse the membrane as a helical segment. Residues 187 to 192 (YTDVVQ) are Cytoplasmic-facing. Residues 193–213 (LFCIFVGLWVCVPAAMVHDGA) traverse the membrane as a helical segment. The Extracellular segment spans residues 214–233 (KDISRNAGDWIGEIGGFKET). A helical transmembrane segment spans residues 234–254 (SLWIDCMLLLVFGGIPWQVYF). The Cytoplasmic segment spans residues 255–270 (QRVLSSKTAHGAQTLS). A helical transmembrane segment spans residues 271-291 (FVAGVGCILMAIPPALIGAIA). Residues 292-319 (RNTDWRMTDYSPWNNGTKVESIPPDKRN) are Extracellular-facing. Asn306 is a glycosylation site (N-linked (GlcNAc...) asparagine). Residues 320–340 (MVVPLVFQYLTPRWVAFIGLG) traverse the membrane as a helical segment. Residues 341-378 (AVSAAVMSSADSSVLSAASMFAHNIWKLTIRPHASEKE) lie on the Cytoplasmic side of the membrane. A helical membrane pass occupies residues 379–399 (VIIVMRIAIICVGIMATIMAL). Topologically, residues 400 to 408 (TIQSIYGLW) are extracellular. A helical membrane pass occupies residues 409–429 (YLCADLVYVILFPQLLCVVYM). Over 430 to 437 (PRSNTYGS) the chain is Cytoplasmic. Residues 438-458 (LAGYAVGLVLRLIGGEPLVSL) form a helical membrane-spanning segment. At 459-478 (PAFFHYPMYTDGVQYFPFRT) the chain is on the extracellular side. Residues 479 to 499 (TAMLSSMATIYIVSIQSEKLF) form a helical membrane-spanning segment. Residues 500–576 (KSGRLSPEWD…DQSYYSTNSN (77 aa)) lie on the Cytoplasmic side of the membrane. A disordered region spans residues 541–576 (APNGTPAPVHPNQQPSDENTLLHPYSDQSYYSTNSN). Polar residues predominate over residues 566-576 (SDQSYYSTNSN).

This sequence belongs to the sodium:solute symporter (SSF) (TC 2.A.21) family. Detected in the nervous system, including the nerve ring and cholinergic motor neurons of the ventral nerve cord.

It localises to the membrane. In terms of biological role, imports choline from the extracellular space to the neuron with high affinity. Choline uptake is the rate-limiting step in acetylcholine synthesis. Sodium ion and chloride ion dependent. This Caenorhabditis elegans protein is High-affinity choline transporter 1 (cho-1).